We begin with the raw amino-acid sequence, 342 residues long: Dysbindin (342 aa).

Serine 11 carries the phosphoserine modification. Residues 83–180 (LSAHWEKKQA…AELDAEHSQK (98 aa)) adopt a coiled-coil conformation. A Nuclear export signal motif is present at residues 243–256 (LMDISDQEALDVFL). The interval 263-342 (NTLLSPISGP…ATLHSDDSDS (80 aa)) is disordered. Residues 286–305 (PTPSQAPATPPSSSSPGTDP) are compositionally biased toward low complexity. Phosphoserine occurs at positions 316, 321, and 340.

Belongs to the dysbindin family. In terms of assembly, interacts (via its coiled coil domain) with KXD1. Interacts with CMYA5, PI4K2 and RNF151. Component of the biogenesis of lysosome-related organelles complex 1 (BLOC-1) composed of at least BLOC1S1, BLOC1S2, BLOC1S3, BLOC1S4, BLOC1S5, BLOC1S6, DTNBP1/BLOC1S7 and SNAPIN/BLOC1S8. Interacts directly in the complex with BLOC1S5, BLOC1S6 and SNAPIN/BLOC1S8. The BLOC-1 complex associates with the AP-3 protein complex and membrane protein cargos. This BLOC-1 complex also associates with the BLOC-2 complex in endosomes. Binds to DTNA and DTNB but may not be a physiological binding partner. Interacts with the DNA-dependent protein kinase complex DNA-PK; the interaction phosphorylates DTNBP1 in vitro. Interacts directly in this complex with XRCC5 and XRCC6. Interacts with AP3M1, AP3B2 and TRIM32. Interacts with XPO1; the interaction exports DTNBP1 out of the nucleus. Ubiquitinated by TRIM32. Ubiquitination leads to DTNBP1 degradation.

It is found in the cytoplasm. The protein localises to the cytoplasmic vesicle membrane. It localises to the cytoplasmic vesicle. The protein resides in the secretory vesicle. Its subcellular location is the synaptic vesicle membrane. It is found in the endosome membrane. The protein localises to the melanosome membrane. It localises to the nucleus. The protein resides in the postsynaptic density. Its subcellular location is the presynaptic cell membrane. It is found in the endoplasmic reticulum. Component of the BLOC-1 complex, a complex that is required for normal biogenesis of lysosome-related organelles (LRO), such as platelet dense granules and melanosomes. In concert with the AP-3 complex, the BLOC-1 complex is required to target membrane protein cargos into vesicles assembled at cell bodies for delivery into neurites and nerve terminals. The BLOC-1 complex, in association with SNARE proteins, is also proposed to be involved in neurite extension. Associates with the BLOC-2 complex to facilitate the transport of TYRP1 independent of AP-3 function. Plays a role in synaptic vesicle trafficking and in neurotransmitter release. Plays a role in the regulation of cell surface exposure of DRD2. May play a role in actin cytoskeleton reorganization and neurite outgrowth. May modulate MAPK8 phosphorylation. Appears to promote neuronal transmission and viability through regulating the expression of SNAP25 and SYN1, modulating PI3-kinase-Akt signaling and influencing glutamatergic release. Regulates the expression of SYN1 through binding to its promoter. Modulates prefrontal cortical activity via the dopamine/D2 pathway. This is Dysbindin (DTNBP1) from Bos taurus (Bovine).